Reading from the N-terminus, the 150-residue chain is Large ribosomal subunit protein uL15 (150 aa).

A disordered region spans residues 1-49 (MELHQLKSVSKSRNHKSKVVGRGHGSGLGKTSSRGQKGQKARKSGLTRL). Over residues 10–21 (SKSRNHKSKVVG) the composition is skewed to basic residues.

The protein belongs to the universal ribosomal protein uL15 family. In terms of assembly, part of the 50S ribosomal subunit.

Binds to the 23S rRNA. This Mycoplasma genitalium (strain ATCC 33530 / DSM 19775 / NCTC 10195 / G37) (Mycoplasmoides genitalium) protein is Large ribosomal subunit protein uL15.